A 76-amino-acid chain; its full sequence is Translational regulator CsrA (76 aa).

The protein belongs to the CsrA/RsmA family. In terms of assembly, homodimer; the beta-strands of each monomer intercalate to form a hydrophobic core, while the alpha-helices form wings that extend away from the core.

The protein localises to the cytoplasm. Its function is as follows. A translational regulator that binds mRNA to regulate translation initiation and/or mRNA stability. Usually binds in the 5'-UTR at or near the Shine-Dalgarno sequence preventing ribosome-binding, thus repressing translation. Its main target seems to be the major flagellin gene, while its function is anatagonized by FliW. This chain is Translational regulator CsrA, found in Helicobacter pylori (strain J99 / ATCC 700824) (Campylobacter pylori J99).